We begin with the raw amino-acid sequence, 128 residues long: MFYSIVAIFVGAGLGALLRWFLSIGLNALLPEVPLGTLASNLIGGYLIGIAVVAFATRAGLPPEWRLFVITGFMGGLTTFSTYSVEVMTHAVQGEFGWALAVAALHLIGSFTLTGLGMWTARAWLAPA.

Transmembrane regions (helical) follow at residues 5–25 (IVAIFVGAGLGALLRWFLSIG), 35–55 (LGTLASNLIGGYLIGIAVVAF), 67–87 (LFVITGFMGGLTTFSTYSVEV), and 96–116 (FGWALAVAALHLIGSFTLTGL). Residues Gly-75 and Thr-78 each coordinate Na(+).

This sequence belongs to the fluoride channel Fluc/FEX (TC 1.A.43) family.

Its subcellular location is the cell inner membrane. It carries out the reaction fluoride(in) = fluoride(out). With respect to regulation, na(+) is not transported, but it plays an essential structural role and its presence is essential for fluoride channel function. In terms of biological role, fluoride-specific ion channel. Important for reducing fluoride concentration in the cell, thus reducing its toxicity. The polypeptide is Fluoride-specific ion channel FluC (Burkholderia pseudomallei (strain 1106a)).